A 780-amino-acid chain; its full sequence is Striatin (780 aa).

Positions 53 to 120 form a coiled coil; the sequence is LHFLQHEWAR…QERAKYHKLK (68 aa). Residues 55–63 form a caveolin-binding region; that stretch reads FLQHEWARF. The segment at 123 to 150 is disordered; sequence TELNQGDMKPPSYDSDEGNETEVQPQQN. Residue Ser137 is modified to Phosphoserine. The interval 149–166 is calmodulin-binding; sequence QNSQLMWKQGRQLLRQYL. At Thr225 the chain carries Phosphothreonine. Phosphoserine occurs at positions 227, 229, 245, and 259. Disordered stretches follow at residues 289–312, 334–353, and 364–392; these read DFLV…DWEK, EQYK…NRSK, and VDEL…ELSR. The span at 299–312 shows a compositional bias: basic and acidic residues; the sequence is NESRSAGDGTDWEK. The span at 338-351 shows a compositional bias: basic residues; the sequence is KERKGKKGVKRPNR. WD repeat units lie at residues 461–500, 514–553, 567–606, 662–701, 704–743, and 750–780; these read SHFD…PAKK, AHKG…VDPY, GHTD…PALS, SSSC…LIHS, AHLE…CIQE, and KFEE…KVFV.

It belongs to the WD repeat striatin family. Part of the core of STRIPAK complexes composed of PP2A catalytic and scaffolding subunits, the striatins (PP2A regulatory subunits), the striatin-associated proteins MOB4, STRIP1 and STRIP2, PDCD10 and members of the STE20 kinases, such as STK24 and STK26. Interacts with CTTNBP2; this interaction may regulate dendritic spine distribution of STRN. Activation of glutamate receptors weakens the interaction with CTTNBP2. As to expression, mainly expressed in brain but is also expressed at low levels in various tissues such as kidney, spleen, skeletal muscle and lung.

The protein resides in the cytoplasm. It is found in the membrane. The protein localises to the cell projection. It localises to the dendritic spine. Its function is as follows. Calmodulin-binding scaffolding protein which is the center of the striatin-interacting phosphatase and kinase (STRIPAK) complexes. STRIPAK complexes have critical roles in protein (de)phosphorylation and are regulators of multiple signaling pathways including Hippo, MAPK, nuclear receptor and cytoskeleton remodeling. Different types of STRIPAK complexes are involved in a variety of biological processes such as cell growth, differentiation, apoptosis, metabolism and immune regulation. The sequence is that of Striatin (Strn) from Mus musculus (Mouse).